The sequence spans 302 residues: 4-hydroxy-tetrahydrodipicolinate synthase (302 aa).

Pyruvate is bound at residue threonine 46. Tyrosine 135 (proton donor/acceptor) is an active-site residue. The active-site Schiff-base intermediate with substrate is lysine 164. Valine 206 is a pyruvate binding site.

Belongs to the DapA family. Homotetramer; dimer of dimers.

It localises to the cytoplasm. The enzyme catalyses L-aspartate 4-semialdehyde + pyruvate = (2S,4S)-4-hydroxy-2,3,4,5-tetrahydrodipicolinate + H2O + H(+). It participates in amino-acid biosynthesis; L-lysine biosynthesis via DAP pathway; (S)-tetrahydrodipicolinate from L-aspartate: step 3/4. Its function is as follows. Catalyzes the condensation of (S)-aspartate-beta-semialdehyde [(S)-ASA] and pyruvate to 4-hydroxy-tetrahydrodipicolinate (HTPA). The chain is 4-hydroxy-tetrahydrodipicolinate synthase from Acidobacterium capsulatum (strain ATCC 51196 / DSM 11244 / BCRC 80197 / JCM 7670 / NBRC 15755 / NCIMB 13165 / 161).